A 137-amino-acid chain; its full sequence is Small ribosomal subunit protein uS9 (137 aa).

Belongs to the universal ribosomal protein uS9 family.

The protein is Small ribosomal subunit protein uS9 (rps9) of Saccharolobus solfataricus (strain ATCC 35092 / DSM 1617 / JCM 11322 / P2) (Sulfolobus solfataricus).